Here is a 793-residue protein sequence, read N- to C-terminus: ATP-dependent RNA helicase DRS1 (793 aa).

A disordered region spans residues 1–208 (MADDFITTID…TTTDPTLPSS (208 aa)). Residues 75–89 (KRGKPIRAFKDRKRK) are compositionally biased toward basic residues. Composition is skewed to acidic residues over residues 94 to 114 (ATSEDDLEEDEEEEGDSNDDS), 122 to 144 (SEEDEMDVDMSEGDGDEEDENEI), and 152 to 184 (ESDEEEEEEEDDYDEEGENEVVDSDSESEEETA). Over residues 193 to 208 (FFSSDPTTTDPTLPSS) the composition is skewed to low complexity. The Q motif signature appears at 207-235 (SSFTAMNLSRPLLRALTSLQFTAPTPIQA). Residues 238 to 416 (IPLALLGRDI…KLSLDKPIRV (179 aa)) enclose the Helicase ATP-binding domain. Residue 251–258 (AVTGSGKT) coordinates ATP. The DEAD box motif lies at 364–367 (DEAD). In terms of domain architecture, Helicase C-terminal spans 427–606 (GLTQEFVRIR…EFKDDIQEIL (180 aa)). A coiled-coil region spans residues 560-630 (EADRKMLKAA…EIKKGQNMVE (71 aa)). Residues 645-793 (QSGKEKQASK…KKGGKGKGRK (149 aa)) are disordered. Composition is skewed to basic and acidic residues over residues 671–688 (SAEKEKEKLKRGKYDGLS) and 726–740 (KITEPQPRLEKAGKG). The span at 741–752 (KDKKKGKARRVT) shows a compositional bias: basic residues. The segment covering 761 to 771 (SEGKKSHEGMR) has biased composition (basic and acidic residues). Positions 782–793 (GKKKGGKGKGRK) are enriched in basic residues.

This sequence belongs to the DEAD box helicase family. DDX27/DRS1 subfamily. Associates with pre-ribosomal particles.

Its subcellular location is the nucleus. It is found in the nucleolus. The catalysed reaction is ATP + H2O = ADP + phosphate + H(+). ATP-binding RNA helicase involved in ribosome assembly. The polypeptide is ATP-dependent RNA helicase DRS1 (DRS1) (Cryptococcus neoformans var. neoformans serotype D (strain JEC21 / ATCC MYA-565) (Filobasidiella neoformans)).